The primary structure comprises 303 residues: Mycothiol acetyltransferase (303 aa).

2 N-acetyltransferase domains span residues valine 3–proline 152 and valine 155–serine 303. Aspartate 35 contacts 1D-myo-inositol 2-(L-cysteinylamino)-2-deoxy-alpha-D-glucopyranoside. Leucine 79–valine 81 serves as a coordination point for acetyl-CoA. The 1D-myo-inositol 2-(L-cysteinylamino)-2-deoxy-alpha-D-glucopyranoside site is built by glutamate 182, lysine 224, and glutamate 237. Acetyl-CoA-binding positions include valine 241–valine 243 and glutamine 248–arginine 254. Residue tyrosine 275 participates in 1D-myo-inositol 2-(L-cysteinylamino)-2-deoxy-alpha-D-glucopyranoside binding.

This sequence belongs to the acetyltransferase family. MshD subfamily. As to quaternary structure, monomer.

It carries out the reaction 1D-myo-inositol 2-(L-cysteinylamino)-2-deoxy-alpha-D-glucopyranoside + acetyl-CoA = mycothiol + CoA + H(+). Its function is as follows. Catalyzes the transfer of acetyl from acetyl-CoA to desacetylmycothiol (Cys-GlcN-Ins) to form mycothiol. This is Mycothiol acetyltransferase from Kocuria rhizophila (strain ATCC 9341 / DSM 348 / NBRC 103217 / DC2201).